The following is a 625-amino-acid chain: Probable potassium transport system protein Kup (625 aa).

12 helical membrane passes run threonine 13–leucine 33, isoleucine 53–valine 73, isoleucine 103–threonine 123, valine 141–glutamine 161, phenylalanine 172–isoleucine 192, alanine 206–leucine 226, tryptophan 250–leucine 270, leucine 282–isoleucine 302, isoleucine 340–phenylalanine 360, alanine 369–isoleucine 389, valine 400–leucine 420, and isoleucine 422–threonine 442.

This sequence belongs to the HAK/KUP transporter (TC 2.A.72) family.

The protein localises to the cell inner membrane. The enzyme catalyses K(+)(in) + H(+)(in) = K(+)(out) + H(+)(out). Functionally, transport of potassium into the cell. Likely operates as a K(+):H(+) symporter. The polypeptide is Probable potassium transport system protein Kup (Acinetobacter baumannii (strain SDF)).